The primary structure comprises 209 residues: FMN-dependent NADH:quinone oxidoreductase (209 aa).

FMN contacts are provided by residues serine 9 and serine 15–serine 17.

This sequence belongs to the azoreductase type 1 family. In terms of assembly, homodimer. Requires FMN as cofactor.

It catalyses the reaction 2 a quinone + NADH + H(+) = 2 a 1,4-benzosemiquinone + NAD(+). The enzyme catalyses N,N-dimethyl-1,4-phenylenediamine + anthranilate + 2 NAD(+) = 2-(4-dimethylaminophenyl)diazenylbenzoate + 2 NADH + 2 H(+). In terms of biological role, quinone reductase that provides resistance to thiol-specific stress caused by electrophilic quinones. Its function is as follows. Also exhibits azoreductase activity. Catalyzes the reductive cleavage of the azo bond in aromatic azo compounds to the corresponding amines. The chain is FMN-dependent NADH:quinone oxidoreductase from Bordetella parapertussis (strain 12822 / ATCC BAA-587 / NCTC 13253).